Reading from the N-terminus, the 660-residue chain is Acetyl-coenzyme A synthetase (660 aa).

CoA is bound by residues 197-200 (RGGK) and Thr-317. Residues 397 to 399 (GEP), 421 to 426 (DTWWQT), Asp-512, and Arg-528 contribute to the ATP site. Ser-536 contributes to the CoA binding site. Arg-539 contacts ATP. Mg(2+) contacts are provided by Val-550, His-552, and Val-555. N6-acetyllysine is present on Lys-625.

This sequence belongs to the ATP-dependent AMP-binding enzyme family. The cofactor is Mg(2+). Post-translationally, acetylated. Deacetylation by the SIR2-homolog deacetylase activates the enzyme.

It catalyses the reaction acetate + ATP + CoA = acetyl-CoA + AMP + diphosphate. In terms of biological role, catalyzes the conversion of acetate into acetyl-CoA (AcCoA), an essential intermediate at the junction of anabolic and catabolic pathways. AcsA undergoes a two-step reaction. In the first half reaction, AcsA combines acetate with ATP to form acetyl-adenylate (AcAMP) intermediate. In the second half reaction, it can then transfer the acetyl group from AcAMP to the sulfhydryl group of CoA, forming the product AcCoA. The chain is Acetyl-coenzyme A synthetase from Burkholderia lata (strain ATCC 17760 / DSM 23089 / LMG 22485 / NCIMB 9086 / R18194 / 383).